The following is a 440-amino-acid chain: 5-methylthioadenosine/S-adenosylhomocysteine deaminase (440 aa).

Positions 70 and 72 each coordinate Zn(2+). Positions 99 and 191 each coordinate substrate. Position 218 (His218) interacts with Zn(2+). Glu221 and Asp306 together coordinate substrate. Asp306 contacts Zn(2+).

Belongs to the metallo-dependent hydrolases superfamily. MTA/SAH deaminase family. Requires Zn(2+) as cofactor.

The catalysed reaction is S-adenosyl-L-homocysteine + H2O + H(+) = S-inosyl-L-homocysteine + NH4(+). It catalyses the reaction S-methyl-5'-thioadenosine + H2O + H(+) = S-methyl-5'-thioinosine + NH4(+). Catalyzes the deamination of 5-methylthioadenosine and S-adenosyl-L-homocysteine into 5-methylthioinosine and S-inosyl-L-homocysteine, respectively. Is also able to deaminate adenosine. The protein is 5-methylthioadenosine/S-adenosylhomocysteine deaminase of Nitratidesulfovibrio vulgaris (strain DSM 19637 / Miyazaki F) (Desulfovibrio vulgaris).